A 68-amino-acid polypeptide reads, in one-letter code: Large ribosomal subunit protein uL29 (68 aa).

It belongs to the universal ribosomal protein uL29 family.

The sequence is that of Large ribosomal subunit protein uL29 from Streptococcus uberis (strain ATCC BAA-854 / 0140J).